Here is a 267-residue protein sequence, read N- to C-terminus: Indole-3-glycerol phosphate synthase (267 aa).

It belongs to the TrpC family.

The catalysed reaction is 1-(2-carboxyphenylamino)-1-deoxy-D-ribulose 5-phosphate + H(+) = (1S,2R)-1-C-(indol-3-yl)glycerol 3-phosphate + CO2 + H2O. It participates in amino-acid biosynthesis; L-tryptophan biosynthesis; L-tryptophan from chorismate: step 4/5. The chain is Indole-3-glycerol phosphate synthase from Cupriavidus taiwanensis (strain DSM 17343 / BCRC 17206 / CCUG 44338 / CIP 107171 / LMG 19424 / R1) (Ralstonia taiwanensis (strain LMG 19424)).